The sequence spans 340 residues: Protein-arginine kinase (340 aa).

Residues 21–242 (VVLSSRIRLA…EQIIMQERIA (222 aa)) form the Phosphagen kinase C-terminal domain. ATP-binding positions include 24 to 28 (SSRIR), H79, R113, 164 to 168 (RASVM), and 195 to 200 (RGIYGE).

It belongs to the ATP:guanido phosphotransferase family.

The enzyme catalyses L-arginyl-[protein] + ATP = N(omega)-phospho-L-arginyl-[protein] + ADP + H(+). In terms of biological role, catalyzes the specific phosphorylation of arginine residues in proteins. This Listeria monocytogenes serotype 4a (strain HCC23) protein is Protein-arginine kinase.